The following is a 384-amino-acid chain: S-adenosylmethionine synthase (384 aa).

Position 15 (His-15) interacts with ATP. Mg(2+) is bound at residue Asp-17. Position 43 (Glu-43) interacts with K(+). L-methionine is bound by residues Glu-56 and Gln-99. The segment at Gln-99–Arg-109 is flexible loop. Residues Asp-164–Lys-166, Arg-230–Phe-231, Asp-239, Arg-245–Lys-246, Ala-262, and Lys-266 contribute to the ATP site. Residue Asp-239 coordinates L-methionine. Lys-270 serves as a coordination point for L-methionine.

This sequence belongs to the AdoMet synthase family. Homotetramer; dimer of dimers. Mg(2+) serves as cofactor. K(+) is required as a cofactor.

The protein localises to the cytoplasm. It carries out the reaction L-methionine + ATP + H2O = S-adenosyl-L-methionine + phosphate + diphosphate. It functions in the pathway amino-acid biosynthesis; S-adenosyl-L-methionine biosynthesis; S-adenosyl-L-methionine from L-methionine: step 1/1. In terms of biological role, catalyzes the formation of S-adenosylmethionine (AdoMet) from methionine and ATP. The overall synthetic reaction is composed of two sequential steps, AdoMet formation and the subsequent tripolyphosphate hydrolysis which occurs prior to release of AdoMet from the enzyme. The protein is S-adenosylmethionine synthase of Salmonella arizonae (strain ATCC BAA-731 / CDC346-86 / RSK2980).